The following is a 377-amino-acid chain: NADH dehydrogenase [ubiquinone] 1 alpha subcomplex subunit 9, mitochondrial (377 aa).

Residues 1 to 35 constitute a mitochondrion transit peptide; it reads MAAAVRFRVVRALPMSRPAITAAATSVFCGSSHRQ. N6-succinyllysine is present on K175. Residues K189 and K370 each carry the N6-acetyllysine modification.

This sequence belongs to the complex I NDUFA9 subunit family. In terms of assembly, complex I is composed of 45 different subunits. This a component of the hydrophobic protein fraction. Interacts with BLOC1S1. Interacts with SLC2A4. Interacts with CLOCK. Interacts with RAB5IF. The cofactor is FAD. In terms of processing, acetylated on lysine residues. BLOC1S1 is required for acetylation. Acetylated by CLOCK in a circadian manner.

Its subcellular location is the mitochondrion matrix. Functionally, accessory subunit of the mitochondrial membrane respiratory chain NADH dehydrogenase (Complex I), that is believed not to be involved in catalysis. Complex I functions in the transfer of electrons from NADH to the respiratory chain. The immediate electron acceptor for the enzyme is believed to be ubiquinone. The chain is NADH dehydrogenase [ubiquinone] 1 alpha subcomplex subunit 9, mitochondrial (Ndufa9) from Mus musculus (Mouse).